An 89-amino-acid polypeptide reads, in one-letter code: Small ribosomal subunit protein uS15 (89 aa).

The protein belongs to the universal ribosomal protein uS15 family. As to quaternary structure, part of the 30S ribosomal subunit. Forms a bridge to the 50S subunit in the 70S ribosome, contacting the 23S rRNA.

One of the primary rRNA binding proteins, it binds directly to 16S rRNA where it helps nucleate assembly of the platform of the 30S subunit by binding and bridging several RNA helices of the 16S rRNA. In terms of biological role, forms an intersubunit bridge (bridge B4) with the 23S rRNA of the 50S subunit in the ribosome. In Pasteurella multocida (strain Pm70), this protein is Small ribosomal subunit protein uS15.